The following is a 397-amino-acid chain: Digeranylgeranylglycerophospholipid reductase 3 (397 aa).

Residues Ala-16, Asp-35, Cys-46, Ala-47, Gly-49, Arg-102, Ala-126, Asp-283, Gly-295, and Ile-296 each contribute to the FAD site. Residue Lys-338 coordinates a 2,3-bis-O-(geranylgeranyl)-sn-glycerol 1-phospholipid.

Belongs to the geranylgeranyl reductase family. DGGGPL reductase subfamily. FAD is required as a cofactor.

It catalyses the reaction a 2,3-bis-O-phytanyl-sn-glycerol 1-phospholipid + 8 A = a 2,3-bis-O-(geranylgeranyl)-sn-glycerol 1-phospholipid + 8 AH2. It carries out the reaction 2,3-bis-O-(phytanyl)-sn-glycerol 1-phosphate + 8 A = 2,3-bis-O-(geranylgeranyl)-sn-glycerol 1-phosphate + 8 AH2. The enzyme catalyses CDP-2,3-bis-O-(geranylgeranyl)-sn-glycerol + 8 AH2 = CDP-2,3-bis-O-(phytanyl)-sn-glycerol + 8 A. The catalysed reaction is archaetidylserine + 8 AH2 = 2,3-bis-O-phytanyl-sn-glycero-3-phospho-L-serine + 8 A. It participates in membrane lipid metabolism; glycerophospholipid metabolism. Is involved in the reduction of 2,3-digeranylgeranylglycerophospholipids (unsaturated archaeols) into 2,3-diphytanylglycerophospholipids (saturated archaeols) in the biosynthesis of archaeal membrane lipids. Catalyzes the formation of archaetidic acid (2,3-di-O-phytanyl-sn-glyceryl phosphate) from 2,3-di-O-geranylgeranylglyceryl phosphate (DGGGP) via the hydrogenation of each double bond of the isoprenoid chains. Is also probably able to reduce double bonds of geranyl groups in CDP-2,3-bis-O-(geranylgeranyl)-sn-glycerol and archaetidylserine, thus acting at various stages in the biosynthesis of archaeal membrane lipids. The sequence is that of Digeranylgeranylglycerophospholipid reductase 3 from Methanosphaera stadtmanae (strain ATCC 43021 / DSM 3091 / JCM 11832 / MCB-3).